The sequence spans 285 residues: MTTKDTWFTEHFQATGSAIGFRVTGKLDEVQSPFQKIEIYNSTDWGKLMVIDGALMLTSRDNFIYHEMISHPALFTHTAPKCVVIIGGGDCGTLREVLKHPDIEQVTQCDIDEQVTRMAEKHFPELCTSNNDPRATLLFSDGVAYMADCPTNSVDVIIVDSTDPIGPAKGLFNRTFYESCFRALKNDGLLIQQSESPLALLELIKEMRHEMSKAGFKAFKTLPFPQPCYPTGWWSVTLSSKQPNANFAFRQTDAQTKPFDTLYYNAHLHHGVLAPPPFIAHALGE.

Residues 5 to 241 (DTWFTEHFQA…GWWSVTLSSK (237 aa)) form the PABS domain. Glutamine 35 is an S-methyl-5'-thioadenosine binding site. The spermidine site is built by histidine 66 and aspartate 90. Residues aspartate 110 and 141–142 (DG) contribute to the S-methyl-5'-thioadenosine site. Aspartate 160 serves as the catalytic Proton acceptor. 160–163 (DSTD) is a spermidine binding site. Residue proline 167 coordinates S-methyl-5'-thioadenosine.

This sequence belongs to the spermidine/spermine synthase family. In terms of assembly, homodimer or homotetramer.

It is found in the cytoplasm. It carries out the reaction S-adenosyl 3-(methylsulfanyl)propylamine + putrescine = S-methyl-5'-thioadenosine + spermidine + H(+). Its pathway is amine and polyamine biosynthesis; spermidine biosynthesis; spermidine from putrescine: step 1/1. Functionally, catalyzes the irreversible transfer of a propylamine group from the amino donor S-adenosylmethioninamine (decarboxy-AdoMet) to putrescine (1,4-diaminobutane) to yield spermidine. This chain is Polyamine aminopropyltransferase, found in Xylella fastidiosa (strain M12).